Reading from the N-terminus, the 229-residue chain is Phosphoglycolate phosphatase (229 aa).

Aspartate 13 serves as the catalytic Nucleophile. Positions 13, 15, and 178 each coordinate Mg(2+).

The protein belongs to the HAD-like hydrolase superfamily. CbbY/CbbZ/Gph/YieH family. Mg(2+) serves as cofactor.

It catalyses the reaction 2-phosphoglycolate + H2O = glycolate + phosphate. The protein operates within organic acid metabolism; glycolate biosynthesis; glycolate from 2-phosphoglycolate: step 1/1. Functionally, specifically catalyzes the dephosphorylation of 2-phosphoglycolate. Is involved in the dissimilation of the intracellular 2-phosphoglycolate formed during the DNA repair of 3'-phosphoglycolate ends, a major class of DNA lesions induced by oxidative stress. The chain is Phosphoglycolate phosphatase from Photobacterium profundum (strain SS9).